The sequence spans 35 residues: Coenzyme PQQ synthesis protein A (35 aa).

Positions 16–20 (EINMY) form a cross-link, pyrroloquinoline quinone (Glu-Tyr).

This sequence belongs to the PqqA family.

It participates in cofactor biosynthesis; pyrroloquinoline quinone biosynthesis. In terms of biological role, required for coenzyme pyrroloquinoline quinone (PQQ) biosynthesis. PQQ is probably formed by cross-linking a specific glutamate to a specific tyrosine residue and excising these residues from the peptide. The protein is Coenzyme PQQ synthesis protein A of Roseobacter denitrificans (strain ATCC 33942 / OCh 114) (Erythrobacter sp. (strain OCh 114)).